A 166-amino-acid polypeptide reads, in one-letter code: MNYTSFILAFQLCAILGSSTYYCQAAFFKEIENLKEYFNASNPDVGDGGPLFLDILKNWKEDSDKKIIQSQIVSFYFKLFENLKDNQVIQKSMDTIKEDLFVKFFNSSTSKLEDFQKLIQIPVNDLKVQRKAISELIKVMNDLSPKANLRKRKRSQNPFRGRRALQ.

An N-terminal signal peptide occupies residues methionine 1–cysteine 23. Pyrrolidone carboxylic acid is present on glutamine 24. N-linked (GlcNAc...) asparagine glycans are attached at residues asparagine 39 and asparagine 106. Residues alanine 147 to glutamine 166 are disordered. Residues asparagine 148 to glutamine 166 are compositionally biased toward basic residues.

It belongs to the type II (or gamma) interferon family. In terms of assembly, homodimer. Interacts with IFNGR1 (via extracellular domain); this interaction promotes IFNGR1 dimerization. Released primarily from activated T lymphocytes.

The protein resides in the secreted. Its function is as follows. Type II interferon produced by immune cells such as T-cells and NK cells that plays crucial roles in antimicrobial, antiviral, and antitumor responses by activating effector immune cells and enhancing antigen presentation. Primarily signals through the JAK-STAT pathway after interaction with its receptor IFNGR1 to affect gene regulation. Upon IFNG binding, IFNGR1 intracellular domain opens out to allow association of downstream signaling components JAK2, JAK1 and STAT1, leading to STAT1 activation, nuclear translocation and transcription of IFNG-regulated genes. Many of the induced genes are transcription factors such as IRF1 that are able to further drive regulation of a next wave of transcription. Plays a role in class I antigen presentation pathway by inducing a replacement of catalytic proteasome subunits with immunoproteasome subunits. In turn, increases the quantity, quality, and repertoire of peptides for class I MHC loading. Increases the efficiency of peptide generation also by inducing the expression of activator PA28 that associates with the proteasome and alters its proteolytic cleavage preference. Up-regulates as well MHC II complexes on the cell surface by promoting expression of several key molecules such as cathepsins B/CTSB, H/CTSH, and L/CTSL. Participates in the regulation of hematopoietic stem cells during development and under homeostatic conditions by affecting their development, quiescence, and differentiation. In Equus caballus (Horse), this protein is Interferon gamma (IFNG).